The primary structure comprises 594 residues: Shugoshin (594 aa).

Positions 38–61 (KITDMETKVSELVQENVSLRSRLS) form a coiled coil. 4 disordered regions span residues 104–178 (SGIH…KSSR), 201–266 (QLPI…TNKN), 342–380 (SKIK…RRTR), and 519–549 (TKQQ…RTKQ). The stretch at 220–240 (EEESQENKHTKEEREDEGKEN) forms a coiled coil. Over residues 224–239 (QENKHTKEEREDEGKE) the composition is skewed to basic and acidic residues. The segment covering 252-261 (SVTNTGTECS) has biased composition (polar residues). Basic residues predominate over residues 343–355 (KIKHSMKHPRTKL). The segment covering 357-376 (GGQDDIMPHTDYDKDDEKRE) has biased composition (basic and acidic residues). 2 stretches are compositionally biased toward polar residues: residues 519 to 532 (TKQQ…SDPN) and 539 to 549 (NSNVKPTRTKQ).

This sequence belongs to the shugoshin family.

The protein localises to the nucleus. It localises to the chromosome. The protein resides in the centromere. Its function is as follows. Plays a central role in chromosome cohesion during cell division by preventing premature dissociation of cohesin complex from centromeres after prophase, when most of cohesin complex dissociates from chromosomes arms. In Kluyveromyces lactis (strain ATCC 8585 / CBS 2359 / DSM 70799 / NBRC 1267 / NRRL Y-1140 / WM37) (Yeast), this protein is Shugoshin (SGO1).